We begin with the raw amino-acid sequence, 123 residues long: Small ribosomal subunit protein uS12 (123 aa).

Residue Asp89 is modified to 3-methylthioaspartic acid. A disordered region spans residues 104 to 123 (TQGVKDRRQRRSKYGAKRPK). Residues 110 to 123 (RRQRRSKYGAKRPK) are compositionally biased toward basic residues.

The protein belongs to the universal ribosomal protein uS12 family. Part of the 30S ribosomal subunit. Contacts proteins S8 and S17. May interact with IF1 in the 30S initiation complex.

With S4 and S5 plays an important role in translational accuracy. Its function is as follows. Interacts with and stabilizes bases of the 16S rRNA that are involved in tRNA selection in the A site and with the mRNA backbone. Located at the interface of the 30S and 50S subunits, it traverses the body of the 30S subunit contacting proteins on the other side and probably holding the rRNA structure together. The combined cluster of proteins S8, S12 and S17 appears to hold together the shoulder and platform of the 30S subunit. This Parvibaculum lavamentivorans (strain DS-1 / DSM 13023 / NCIMB 13966) protein is Small ribosomal subunit protein uS12.